Reading from the N-terminus, the 168-residue chain is MAYQDEESKEYSEKVVKIDRVAKVVKGGRRFSFNALSVVGDQKGKVGIGFGKANEVPDAIRKSIEAAKKHLVKINFKGHTIPHEVVGKFKSARVILKPSTAGTGIIAGASVRSIVEKAGIQDVLTKSWGSSNPVNIVKATLDALEQLETPILAAKKRGISLNQLFGKD.

Positions Y11–I74 constitute an S5 DRBM domain.

The protein belongs to the universal ribosomal protein uS5 family. As to quaternary structure, part of the 30S ribosomal subunit. Contacts proteins S4 and S8.

In terms of biological role, with S4 and S12 plays an important role in translational accuracy. Located at the back of the 30S subunit body where it stabilizes the conformation of the head with respect to the body. This chain is Small ribosomal subunit protein uS5, found in Leptospira borgpetersenii serovar Hardjo-bovis (strain JB197).